The sequence spans 442 residues: UDP-N-acetylglucosamine 1-carboxyvinyltransferase (442 aa).

Position 22-23 (lysine 22–asparagine 23) interacts with phosphoenolpyruvate. Arginine 94 is a UDP-N-acetyl-alpha-D-glucosamine binding site. Aspartate 119 acts as the Proton donor in catalysis. The UDP-N-acetyl-alpha-D-glucosamine site is built by aspartate 309 and valine 331.

This sequence belongs to the EPSP synthase family. MurA subfamily.

The protein localises to the cytoplasm. It catalyses the reaction phosphoenolpyruvate + UDP-N-acetyl-alpha-D-glucosamine = UDP-N-acetyl-3-O-(1-carboxyvinyl)-alpha-D-glucosamine + phosphate. Its pathway is cell wall biogenesis; peptidoglycan biosynthesis. In terms of biological role, cell wall formation. Adds enolpyruvyl to UDP-N-acetylglucosamine. This is UDP-N-acetylglucosamine 1-carboxyvinyltransferase from Chlamydia muridarum (strain MoPn / Nigg).